The primary structure comprises 490 residues: Cyclin-A2-1 (490 aa).

Positions 34-76 (FAPSVSLPARTERKQTAKGKTKRGALDEITSASTATSAPQPKR) are disordered. Residues 63–72 (TSASTATSAP) are compositionally biased toward polar residues.

Belongs to the cyclin family. Cyclin AB subfamily.

The chain is Cyclin-A2-1 (CYCA2-1) from Oryza sativa subsp. japonica (Rice).